Consider the following 172-residue polypeptide: Small acidic protein (172 aa).

The tract at residues 1–160 (MSSARESQAR…VPETKKEAKS (160 aa)) is disordered. A compositionally biased stretch (basic and acidic residues) spans 46–76 (GKKEHTGRLVIGDHRSTSHFRTGEEDKKMNE). The span at 80–92 (SQYQQSMDSTMSG) shows a compositional bias: polar residues. Basic and acidic residues-rich tracts occupy residues 112–122 (AAGHSSDHESS) and 144–160 (ETHD…EAKS).

This sequence belongs to the SMAP family. In terms of tissue distribution, expressed in brain, heart, eye, liver, kidney and skeletal muscle.

In Gallus gallus (Chicken), this protein is Small acidic protein (SMAP).